The sequence spans 179 residues: MAVSQTTLWNLISGILGVICLLLMTTMGILLKNLLLTESIQPTLSPGPITELQKGSDCCSCPKRWIGHQCNCYLFFDELKSWTESRDFCASQNSSLLHIQNRDELRFVSSSKYFYWIGVYYSKENGTWLWENGLALPQDLLQTIQTFDTKKCVIYSSSHSVLDVSCEDKSRFICKQELM.

Topologically, residues 1-10 (MAVSQTTLWN) are cytoplasmic. The chain crosses the membrane as a helical; Signal-anchor for type II membrane protein span at residues 11–31 (LISGILGVICLLLMTTMGILL). Over 32–179 (KNLLLTESIQ…SRFICKQELM (148 aa)) the chain is Extracellular. Cystine bridges form between Cys58/Cys70, Cys61/Cys72, Cys89/Cys174, and Cys152/Cys166. Positions 68–175 (HQCNCYLFFD…CEDKSRFICK (108 aa)) constitute a C-type lectin domain. N-linked (GlcNAc...) asparagine glycosylation is found at Asn93 and Asn125.

Can form disulfide-bonded heterodimer with NKG2 family members KLRC1 and KLRC2. KLRD1-KLRC1 heterodimer interacts with peptide-bound MHC-E-B2M heterotrimeric complex. KLRD1 plays a prominent role in directly interacting with MHC-E. KLRD1-KLRC1 interacts with much higher affinity with peptide-bound MHC-E-B2M than KLRD1-KLRC2. Interacts with the adapter protein TYROBP/DAP12; this interaction is required for cell surface expression and cell activation.

The protein localises to the cell membrane. Immune receptor involved in self-nonself discrimination. In complex with KLRC1 or KLRC2 on cytotoxic and regulatory lymphocyte subsets, recognizes non-classical major histocompatibility (MHC) class Ib molecule MHC-E loaded with self-peptides derived from the signal sequence of classical MHC class Ia and non-classical MHC class Ib molecules. Enables cytotoxic cells to monitor the expression of MHC class I molecules in healthy cells and to tolerate self. Primarily functions as a ligand binding subunit as it lacks the capacity to signal. In terms of biological role, KLRD1-KLRC1 acts as an immune inhibitory receptor. Key inhibitory receptor on natural killer (NK) cells that regulates their activation and effector functions. Dominantly counteracts T cell receptor signaling on a subset of memory/effector CD8-positive T cells as part of an antigen-driven response to avoid autoimmunity. On intraepithelial CD8-positive gamma-delta regulatory T cells triggers TGFB1 secretion, which in turn limits the cytotoxic programming of intraepithelial CD8-positive alpha-beta T cells, distinguishing harmless from pathogenic antigens. In MHC-E-rich tumor microenvironment, acts as an immune inhibitory checkpoint and may contribute to progressive loss of effector functions of NK cells and tumor-specific T cells, a state known as cell exhaustion. Upon MHC-E-peptide binding, transmits intracellular signals through KLRC1 immunoreceptor tyrosine-based inhibition motifs (ITIMs) by recruiting INPP5D/SHIP-1 and INPPL1/SHIP-2 tyrosine phosphatases to ITIMs, and ultimately opposing signals transmitted by activating receptors through dephosphorylation of proximal signaling molecules. Its function is as follows. KLRD1-KLRC2 acts as an immune activating receptor. On cytotoxic lymphocyte subsets recognizes MHC-E loaded with signal sequence-derived peptides from non-classical MHC class Ib MHC-G molecules, likely playing a role in the generation and effector functions of adaptive NK cells and in maternal-fetal tolerance during pregnancy. Regulates the effector functions of terminally differentiated cytotoxic lymphocyte subsets, and in particular may play a role in adaptive NK cell response to viral infection. Upon MHC-E-peptide binding, transmits intracellular signals via the adapter protein TYROBP/DAP12, triggering the phosphorylation of proximal signaling molecules and cell activation. This is Natural killer cells antigen CD94 (KLRD1) from Canis lupus familiaris (Dog).